We begin with the raw amino-acid sequence, 164 residues long: Transcription antitermination protein NusB (164 aa).

Belongs to the NusB family.

Its function is as follows. Involved in transcription antitermination. Required for transcription of ribosomal RNA (rRNA) genes. Binds specifically to the boxA antiterminator sequence of the ribosomal RNA (rrn) operons. The sequence is that of Transcription antitermination protein NusB from Chlamydia muridarum (strain MoPn / Nigg).